A 473-amino-acid chain; its full sequence is H(+)/Cl(-) exchange transporter ClcA (473 aa).

The Cytoplasmic segment spans residues 1 to 32 (MNTDTPTFEAQQVVRLRRGDLIRRLLQRDKTP). A helical transmembrane segment spans residues 33 to 69 (LAILLTAAVVGTVTGLIGVAFEKAVTWVQNLRIGALV). Topologically, residues 70 to 76 (QTADYAI) are periplasmic. A helical transmembrane segment spans residues 77–100 (LVWPLAFILSALLAMVGYFLVRKF). The Cytoplasmic portion of the chain corresponds to 101-108 (APEAGGSG). Residues 106 to 110 (GSGIP) carry the Selectivity filter part_1 motif. Residue S107 coordinates chloride. An intramembrane region (helical) is located at residues 109–116 (IPEIEGAL). Residues 117 to 123 (EELRPVR) lie on the Cytoplasmic side of the membrane. A helical membrane pass occupies residues 124-141 (WWRVLPVKFVGGMGTLGA). The Periplasmic portion of the chain corresponds to 142 to 147 (GMVLGR). Positions 146 to 150 (GREGP) match the Selectivity filter part_2 motif. The chain crosses the membrane as a helical span at residues 148–166 (EGPTVQIGGNIGRMVLDLF). The Cytoplasmic portion of the chain corresponds to 167 to 176 (RMRSAEARHT). 2 intramembrane regions (helical) span residues 177–189 (LLAT…LSAA) and 193–201 (PLAGILFII). Residues 202-214 (EEMRPQFRYNLIS) lie on the Cytoplasmic side of the membrane. Residues 215-232 (IKAVFTGVIMSSIVFRIF) traverse the membrane as a helical segment. At 233–252 (NGEAPIIEVGKLSNAPVNTL) the chain is on the periplasmic side. A helical transmembrane segment spans residues 253–281 (WLYLILGMIFGCVGPLFNHLVLRTQDMFQ). Residues 282–287 (RFHGGE) are Cytoplasmic-facing. Residues 288–309 (IKKWVLMGGAIGGLCGILGLIE) form a helical membrane-spanning segment. The Periplasmic segment spans residues 310 to 329 (PEAAGGGFNLIPIAAAGNYS). Residues 330–349 (VGLLLFIFIARVLTTLLCFS) traverse the membrane as a helical segment. The Cytoplasmic segment spans residues 350–354 (SGAPG). Positions 355-359 (GIFAP) match the Selectivity filter part_3 motif. The chain crosses the membrane as a helical span at residues 355–376 (GIFAPMLALGTLLGTAFGMAAA). Chloride-binding residues include I356 and F357. The Periplasmic portion of the chain corresponds to 377–386 (ACFPQYHLEA). An intramembrane region (helical) is located at residues 387-401 (GTFAIAGMGALLAAS). The segment at residues 402–404 (VRA) is an intramembrane region (note=Loop between two helices). The segment at residues 405–416 (PLTGIVLVLEMT) is an intramembrane region (helical). An intramembrane region (note=Loop between two helices) is located at residues 417-421 (DNYQL). Residues 422 to 438 (ILPMIITCLGATLLAQF) traverse the membrane as a helical segment. Over 439-473 (MGGKPLYSTILARTLAKQDAEQAAKSQRSVAGENT) the chain is Cytoplasmic. Y445 is a binding site for chloride.

It belongs to the chloride channel (TC 2.A.49) family. ClcA subfamily. In terms of assembly, homodimer.

Its subcellular location is the cell inner membrane. It catalyses the reaction 2 chloride(in) + H(+)(out) = 2 chloride(out) + H(+)(in). Its function is as follows. Proton-coupled chloride transporter. Functions as antiport system and exchanges two chloride ions for 1 proton. Probably acts as an electrical shunt for an outwardly-directed proton pump that is linked to amino acid decarboxylation, as part of the extreme acid resistance (XAR) response. The sequence is that of H(+)/Cl(-) exchange transporter ClcA from Citrobacter koseri (strain ATCC BAA-895 / CDC 4225-83 / SGSC4696).